The chain runs to 291 residues: Protein ILRUN (291 aa).

Residues 199 to 291 (NTQPHRKVEG…LHGPYPFGQS (93 aa)) form a disordered region. Over residues 212–228 (PFASPQKNRQSDENNLT) the composition is skewed to polar residues. Phosphoserine occurs at positions 215, 222, and 265. Over residues 257–276 (LSQSSVNLSPSSPANNLSVV) the composition is skewed to low complexity.

Interacts with IRF3; the interaction inhibits IRF3 binding to its DNA consensus sequence.

It localises to the cytoplasm. Its subcellular location is the nucleus. In terms of biological role, negative regulator of innate antiviral response. Blocks IRF3-dependent cytokine production such as IFNA, IFNB and TNF. Interacts with IRF3 and inhibits IRF3 recruitment to type I IFN promoter sequences while also reducing nuclear levels of the coactivators EP300 and CREBBP. The chain is Protein ILRUN from Mus musculus (Mouse).